Reading from the N-terminus, the 204-residue chain is Thymidylate kinase (204 aa).

11-18 (GIDGAGKS) contributes to the ATP binding site.

This sequence belongs to the thymidylate kinase family.

The enzyme catalyses dTMP + ATP = dTDP + ADP. Its function is as follows. Phosphorylation of dTMP to form dTDP in both de novo and salvage pathways of dTTP synthesis. This is Thymidylate kinase from Janthinobacterium sp. (strain Marseille) (Minibacterium massiliensis).